The sequence spans 347 residues: Dolichyl-diphosphooligosaccharide--protein glycosyltransferase subunit TUSC3 (347 aa).

Positions 1-41 (MGARGAPSRRRQAGRRPRYLPTGSFPFLLLLLLLCIQLGGG) are cleaved as a signal peptide. Topologically, residues 42 to 196 (QKKKENLLAE…DVHIRVFRPP (155 aa)) are lumenal. A Thioredoxin domain is found at 59 to 187 (WSSRRSVFRM…LAKWIADRTD (129 aa)). N83 carries an N-linked (GlcNAc...) asparagine glycan. C99 and C102 are joined by a disulfide. A helical transmembrane segment spans residues 197 to 217 (NYSGTIALALLVSLVGGLLYL). Residues 218-221 (RRNN) are Cytoplasmic-facing. Residues 222 to 242 (LEFIYNKTGWAMVSLCIVFAM) form a helical membrane-spanning segment. Residues 243 to 276 (TSGQMWNHIRGPPYAHKNPHNGQVSYIHGSSQVQ) lie on the Lumenal side of the membrane. Residues 277-297 (FVAESHIILVLNAAITMGMDL) traverse the membrane as a helical segment. The Cytoplasmic portion of the chain corresponds to 298–312 (LNEAATSKGDVGKRR). A helical transmembrane segment spans residues 313 to 333 (IICLVGLGLVVFFFSFLLSIF). The Lumenal segment spans residues 334–347 (RSKYHGYPYSFLIK).

This sequence belongs to the OST3/OST6 family. In terms of assembly, accessory component of the STT3B-containing form of the oligosaccharyltransferase (OST) complex. OST exists in two different complex forms which contain common core subunits RPN1, RPN2, OST48, OST4, DAD1 and TMEM258, either STT3A or STT3B as catalytic subunits, and form-specific accessory subunits. OST can form stable complexes with the Sec61 complex or with both the Sec61 and TRAP complexes. The association of TUSC3 or MAGT1 with the STT3B-containing complex seems to be mutually exclusvice.

The protein resides in the endoplasmic reticulum membrane. It functions in the pathway protein modification; protein glycosylation. Functionally, acts as accessory component of the N-oligosaccharyl transferase (OST) complex which catalyzes the transfer of a high mannose oligosaccharide from a lipid-linked oligosaccharide donor to an asparagine residue within an Asn-X-Ser/Thr consensus motif in nascent polypeptide chains. Involved in N-glycosylation of STT3B-dependent substrates. Specifically required for the glycosylation of a subset of acceptor sites that are near cysteine residues; in this function seems to act redundantly with MAGT1. In its oxidized form proposed to form transient mixed disulfides with a glycoprotein substrate to facilitate access of STT3B to the unmodified acceptor site. Also has oxidoreductase-independent functions in the STT3B-containing OST complex possibly involving substrate recognition. Could indirectly play a role in Mg(2+) transport. The sequence is that of Dolichyl-diphosphooligosaccharide--protein glycosyltransferase subunit TUSC3 (TUSC3) from Bos taurus (Bovine).